The primary structure comprises 207 residues: RNA chaperone ProQ (207 aa).

Residues 100-156 (TLAESKAKVQARRKEQAQKARDEEKSKPKTKKAPQQRRANKPQAQKPAKQPVETRAL) are disordered. The span at 111-126 (RRKEQAQKARDEEKSK) shows a compositional bias: basic and acidic residues. Basic residues predominate over residues 127-139 (PKTKKAPQQRRAN).

It belongs to the ProQ family.

Its subcellular location is the cytoplasm. Functionally, RNA chaperone with significant RNA binding, RNA strand exchange and RNA duplexing activities. The chain is RNA chaperone ProQ from Vibrio vulnificus (strain CMCP6).